We begin with the raw amino-acid sequence, 207 residues long: Probable GTP-binding protein EngB (207 aa).

The 172-residue stretch at 22 to 193 (RVPEIVFAGR…LAHFDHYLSG (172 aa)) folds into the EngB-type G domain. GTP is bound by residues 30–37 (GRSNVGKS), 57–61 (GKTRL), 75–78 (DIPG), 142–145 (TKDD), and 172–174 (YSS). Mg(2+) is bound by residues Ser-37 and Thr-59.

It belongs to the TRAFAC class TrmE-Era-EngA-EngB-Septin-like GTPase superfamily. EngB GTPase family. Mg(2+) is required as a cofactor.

Functionally, necessary for normal cell division and for the maintenance of normal septation. The protein is Probable GTP-binding protein EngB of Chlorobium luteolum (strain DSM 273 / BCRC 81028 / 2530) (Pelodictyon luteolum).